The primary structure comprises 821 residues: Phenylalanine--tRNA ligase beta subunit (821 aa).

One can recognise a tRNA-binding domain in the interval 39–149 (SENVKGIVLG…EDIALNHNLG (111 aa)). In terms of domain architecture, B5 spans 414 to 507 (LKKILIPLRR…RLIGYDMFDL (94 aa)). Mg(2+)-binding residues include D485, D491, E494, and E495. The 94-residue stretch at 727-820 (PTVPKMERDI…IEKKFSTKLR (94 aa)) folds into the FDX-ACB domain.

It belongs to the phenylalanyl-tRNA synthetase beta subunit family. Type 1 subfamily. In terms of assembly, tetramer of two alpha and two beta subunits. The cofactor is Mg(2+).

It localises to the cytoplasm. It carries out the reaction tRNA(Phe) + L-phenylalanine + ATP = L-phenylalanyl-tRNA(Phe) + AMP + diphosphate + H(+). The sequence is that of Phenylalanine--tRNA ligase beta subunit from Prochlorococcus marinus subsp. pastoris (strain CCMP1986 / NIES-2087 / MED4).